A 987-amino-acid chain; its full sequence is AP3-complex subunit beta-A (987 aa).

The tract at residues 586-662 (QDQLSDLDKQ…ISETSVSADQ (77 aa)) is disordered. The segment covering 603 to 613 (DGSEESSETGD) has biased composition (acidic residues). Residues 614–631 (ENGSSDYDSESSNGSDFS) show a composition bias toward low complexity.

It belongs to the adaptor complexes large subunit family. As to quaternary structure, adaptor protein complex 3 (AP-3) is a heterotetramer composed of two large adaptins (delta-type subunit and beta-type subunit), a medium adaptin (mu-type subunit) and a small adaptin (sigma-type subunit).

The protein localises to the cytoplasm. It localises to the golgi apparatus. It is found in the cytoplasmic vesicle membrane. Part of the AP-3 complex, an adaptor-related complex which seems to be clathrin-associated. The complex is associated with the Golgi region as well as more peripheral structures. It facilitates the budding of vesicles from the Golgi membrane and may be directly involved in trafficking to the vacuole. It also function in maintaining the identity of lytic vacuoles and in regulating the transition between storage and lytic vacuoles. This Arabidopsis thaliana (Mouse-ear cress) protein is AP3-complex subunit beta-A (AP3BA).